The sequence spans 352 residues: Coproporphyrin III ferrochelatase (352 aa).

Fe-coproporphyrin III is bound by residues S52 and Y121. Fe(2+) contacts are provided by H181 and E269.

This sequence belongs to the ferrochelatase family.

The protein localises to the cytoplasm. The catalysed reaction is Fe-coproporphyrin III + 2 H(+) = coproporphyrin III + Fe(2+). It participates in porphyrin-containing compound metabolism; protoheme biosynthesis. In terms of biological role, involved in coproporphyrin-dependent heme b biosynthesis. Catalyzes the insertion of ferrous iron into coproporphyrin III to form Fe-coproporphyrin III. This Nocardia farcinica (strain IFM 10152) protein is Coproporphyrin III ferrochelatase.